The sequence spans 40 residues: Photosystem II reaction center protein T (40 aa).

The helical transmembrane segment at 3–23 threads the bilayer; that stretch reads ALVYTFLLVGTLGIIFFAIFF.

Belongs to the PsbT family. In terms of assembly, PSII is composed of 1 copy each of membrane proteins PsbA, PsbB, PsbC, PsbD, PsbE, PsbF, PsbH, PsbI, PsbJ, PsbK, PsbL, PsbM, PsbT, PsbY, PsbZ, Psb30/Ycf12, at least 3 peripheral proteins of the oxygen-evolving complex and a large number of cofactors. It forms dimeric complexes.

The protein resides in the plastid. It localises to the chloroplast thylakoid membrane. Found at the monomer-monomer interface of the photosystem II (PS II) dimer, plays a role in assembly and dimerization of PSII. PSII is a light-driven water plastoquinone oxidoreductase, using light energy to abstract electrons from H(2)O, generating a proton gradient subsequently used for ATP formation. The chain is Photosystem II reaction center protein T from Anthoceros angustus (Hornwort).